We begin with the raw amino-acid sequence, 77 residues long: Conotoxin VnMEKL-023 (77 aa).

Residues 1–19 (MQKLTILLLVAAVLMSTQA) form the signal peptide. The propeptide occupies 20–37 (LIKGGGEKRPKEKIRFLS). Cystine bridges form between Cys-51-Cys-65, Cys-58-Cys-69, and Cys-64-Cys-74.

Belongs to the conotoxin O2 superfamily. In terms of tissue distribution, expressed by the venom duct.

Its subcellular location is the secreted. This Conus ventricosus (Mediterranean cone) protein is Conotoxin VnMEKL-023.